We begin with the raw amino-acid sequence, 1561 residues long: Synemin (1561 aa).

The head stretch occupies residues 1-10 (MLSWRLQTGS). The interval 11 to 49 (EKAELQELNARLYDYVCRVRELERENLLLEEELRSRLSR) is coil 1A. The interval 11 to 320 (EKAELQELNA…YRALLEGESN (310 aa)) is interaction with DMD and UTRN. An IF rod domain is found at 11 to 322 (EKAELQELNA…ALLEGESNPE (312 aa)). Positions 50–58 (EDRWAEDQA) are linker 1. The segment at 59–163 (LYAEEARSLR…DLRARAASLT (105 aa)) is coil 1B. The interval 164-186 (MHFRARATSPAAPPPRLRDVHDS) is linker 12. The tract at residues 187-300 (YALLVAESWR…LRDYQELLQV (114 aa)) is coil 2. Positions 301 to 1561 (KTGLSLEVAT…EEEEEGEGWF (1261 aa)) are tail. Polar residues-rich tracts occupy residues 371–390 (SSAS…TTAV) and 401–421 (SRHS…KTIS). 3 disordered regions span residues 371–421 (SSAS…KTIS), 549–574 (DARK…RSVK), and 591–637 (EVST…DSTT). Residues 601-624 (GRKDVSHSGGREAETKETRFRLDT) are compositionally biased toward basic and acidic residues. Positions 625–637 (QDTASSLQSDSTT) are enriched in polar residues. Phosphothreonine is present on T653. 9 positions are modified to phosphoserine: S655, S778, S780, S1044, S1049, S1077, S1087, S1179, and S1182. Disordered regions lie at residues 1033 to 1061 (SVVR…VPAG) and 1075 to 1099 (SPSG…QGPV). Residues 1086–1099 (VSPSSDQRVTQGPV) are compositionally biased toward polar residues. The interaction with TLN1 and VCL stretch occupies residues 1152–1453 (VSGDFSEAVS…GPKETSFTFQ (302 aa)). Residues 1212–1231 (ADISGSGRMPGSERSHTEKE) are disordered. The segment covering 1222 to 1231 (GSERSHTEKE) has biased composition (basic and acidic residues). Positions 1242-1557 (AQVGGNFATE…DNEEEEEEEG (316 aa)) are interaction with DMD and UTRN. At S1425 the chain carries Phosphoserine. R1481 bears the Omega-N-methylarginine mark. The interval 1491 to 1519 (DERVASTGSGASPGDAHQAPGEKGTEQAG) is disordered.

The protein belongs to the intermediate filament family. Interacts with DES, DMD, DTNA, TLN1, UTRN and VCL. Isoform 1 and isoform 2 interact with GFAP and VIM. Isoform 2 and isoform 3 are detected in adult skeletal muscle, heart and bladder, whereas isoform 1 is only detected in adult bladder (at protein level).

The protein resides in the cytoplasm. It localises to the cytoskeleton. Its subcellular location is the cell junction. The protein localises to the adherens junction. Its function is as follows. Type-VI intermediate filament (IF) which plays an important cytoskeletal role within the muscle cell cytoskeleton. It forms heteromeric IFs with desmin and/or vimentin, and via its interaction with cytoskeletal proteins alpha-dystrobrevin, dystrophin, talin-1, utrophin and vinculin, is able to link these heteromeric IFs to adherens-type junctions, such as to the costameres, neuromuscular junctions, and myotendinous junctions within striated muscle cells. This chain is Synemin, found in Mus musculus (Mouse).